We begin with the raw amino-acid sequence, 603 residues long: UvrABC system protein C (603 aa).

Residues 13–92 form the GIY-YIG domain; sequence SSPGVYLMKD…IKQHHPKYNV (80 aa). In terms of domain architecture, UVR spans 205–240; that stretch reads EEVVKDLEKVIQKASDNLEFEQAANYYRTLSLIKQA.

This sequence belongs to the UvrC family. As to quaternary structure, interacts with UvrB in an incision complex.

It localises to the cytoplasm. Its function is as follows. The UvrABC repair system catalyzes the recognition and processing of DNA lesions. UvrC both incises the 5' and 3' sides of the lesion. The N-terminal half is responsible for the 3' incision and the C-terminal half is responsible for the 5' incision. The chain is UvrABC system protein C from Chlamydia pneumoniae (Chlamydophila pneumoniae).